The following is a 71-amino-acid chain: Large ribosomal subunit protein eL38 (71 aa).

Belongs to the eukaryotic ribosomal protein eL38 family.

In Argas monolakensis (Mono lake bird tick), this protein is Large ribosomal subunit protein eL38 (RpL38).